Consider the following 277-residue polypeptide: Undecaprenyl-diphosphatase (277 aa).

7 helical membrane-spanning segments follow: residues 3–23, 44–64, 82–102, 109–129, 188–208, 218–238, and 249–269; these read IALL…EFLP, AKVF…LVYW, QFAL…LLFG, LFTP…ILWA, ATDF…VYSL, ADVP…WLCI, and SFIP…ATAW.

Belongs to the UppP family.

It is found in the cell inner membrane. It catalyses the reaction di-trans,octa-cis-undecaprenyl diphosphate + H2O = di-trans,octa-cis-undecaprenyl phosphate + phosphate + H(+). Functionally, catalyzes the dephosphorylation of undecaprenyl diphosphate (UPP). Confers resistance to bacitracin. This is Undecaprenyl-diphosphatase from Polaromonas sp. (strain JS666 / ATCC BAA-500).